The primary structure comprises 265 residues: Small ribosomal subunit protein uS2 (265 aa).

The protein belongs to the universal ribosomal protein uS2 family.

The chain is Small ribosomal subunit protein uS2 from Gluconobacter oxydans (strain 621H) (Gluconobacter suboxydans).